The following is a 507-amino-acid chain: uncharacterized protein (507 aa).

12 helical membrane-spanning segments follow: residues 46 to 66 (WIVLLAVALLNNTNTMSWIGY), 83 to 103 (AWLSMVYMMCTIPVGMFAMWA), 112 to 132 (AVLIAGWANGIGAVIRVISSL), 141 to 161 (FPICMTGQGIAAIAYPFIMFL), 181 to 201 (IGVMSNPLGVLMANLISPAIV), 207 to 227 (VIWLNIFTCVPSLIAMLIATF), 263 to 283 (IILLIVMGGGIGMFNCLYTVM), 299 to 319 (VCAALMIVGGVFGAAASSIFV), 328 to 348 (TLKIALGAAVIFGLIFLQLTL), 354 to 374 (VILGVTCLLFGVLGLATYPIG), 389 to 409 (TSTGLIVLSGQIQSVIYVFIM), and 442 to 462 (MSIMIFSLLATLLVLTLVVLF). Residues 477 to 493 (ATADKAKELSNQNKDRI) are compositionally biased toward basic and acidic residues. The interval 477-507 (ATADKAKELSNQNKDRITLQAESAVEPLQKK) is disordered.

The protein resides in the membrane. This is an uncharacterized protein from Caenorhabditis elegans.